The primary structure comprises 1053 residues: LRR receptor-like serine/threonine-protein kinase GHR1 (1053 aa).

Residues 1–18 (MNLSRILLLSMFFLSAMG) form the signal peptide. Residues 19-630 (QLPSQDIMAL…NKSTNKLVKV (612 aa)) are Extracellular-facing. LRR repeat units follow at residues 73–93 (GVVL…FSNL), 94–119 (TKLV…SFKS), 121–141 (QFLD…IGRS), 142–165 (VSLR…MGGL), 166–189 (ISLQ…LTRL), 191–212 (DLLY…GFEL), 213–237 (ISSL…FFLL), 239–260 (NASY…LLPG), 262–285 (SESI…GFQL), 286–309 (FQNL…FNYV), 310–333 (YDLE…LLKG), 335–357 (SLLL…SIMS), and 358–384 (TTLH…CVLL). The N-linked (GlcNAc...) asparagine glycan is linked to N92. S100 and S102 each carry phosphoserine; by HT1. N103 carries N-linked (GlcNAc...) asparagine glycosylation. Phosphoserine; by HT1 occurs at positions 105 and 126. N146 and N153 each carry an N-linked (GlcNAc...) asparagine glycan. Residue N196 is glycosylated (N-linked (GlcNAc...) asparagine). N239 carries N-linked (GlcNAc...) asparagine glycosylation. S262 is modified (phosphoserine; by HT1). N269 carries an N-linked (GlcNAc...) asparagine glycan. S278 bears the Phosphoserine; by HT1 mark. A Phosphothreonine; by HT1 modification is found at T280. The residue at position 281 (S281) is a Phosphoserine; by HT1. S325 carries the post-translational modification Phosphoserine; by HT1. A glycan (N-linked (GlcNAc...) asparagine) is linked at N347. N394 carries an N-linked (GlcNAc...) asparagine glycan. LRR repeat units lie at residues 401–425 (WENI…TPQL), 426–449 (LRAN…IPTH), 450–474 (YPKL…LLSM), 476–498 (TLEE…PSSG), 499–521 (SRIR…VFGS), 522–546 (LTNL…MNDI), 548–570 (SLSS…LSSN), and 572–592 (MAFN…LKNF). Y406 is subject to Phosphotyrosine; by HT1. S410 carries the post-translational modification Phosphoserine; by HT1. Phosphothreonine; by HT1 is present on T415. S417 bears the Phosphoserine; by HT1 mark. An N-linked (GlcNAc...) asparagine glycan is attached at N432. S434 bears the Phosphoserine; by HT1 mark. N-linked (GlcNAc...) asparagine glycosylation is found at N534, N566, and N575. Residues S613, S614, and S616 each carry the phosphoserine; by HT1 modification. N621 carries N-linked (GlcNAc...) asparagine glycosylation. Residues 631–651 (VIIVSCAVALIILILVAILLF) form a helical membrane-spanning segment. The Cytoplasmic segment spans residues 652 to 1053 (CICKSRRREE…KTIYEDLSSI (402 aa)). Positions 662-671 (RSITGKETNR) are enriched in basic and acidic residues. The segment at 662 to 684 (RSITGKETNRRAQTIPSGSGGGM) is disordered. Phosphothreonine; by HT1 is present on residues T669 and T675. A phosphoserine; by HT1 mark is found at S678, S680, S698, S699, and S700. Residue S704 is modified to Phosphoserine. T713 carries the phosphothreonine; by HT1 modification. Phosphoserine; by HT1 occurs at positions 716 and 718. T720 bears the Phosphothreonine; by HT1 mark. Phosphoserine; by HT1 is present on residues S721, S724, and S760. T764 bears the Phosphothreonine; by HT1 mark. Residue S769 is modified to Phosphoserine; by HT1. One can recognise a Protein kinase domain in the interval 770–1053 (RAPAEVLGRS…KTIYEDLSSI (284 aa)). Residues 776-784 (LGRSSHGTS) and K798 contribute to the ATP site. A phosphothreonine; by HT1 mark is found at T928 and T1010. Phosphoserine; by HT1 is present on S1015. T1045 bears the Phosphothreonine; by HT1 mark. The residue at position 1047 (Y1047) is a Phosphotyrosine; by HT1. Phosphoserine; by HT1 is present on residues S1051 and S1052.

The protein belongs to the protein kinase superfamily. Ser/Thr protein kinase family. As to quaternary structure, interacts with SLAC1 (via N-terminus). Binds to ABI2, but not ABI1. Interacts with CPK3. Phosphorylated by HT1; this phosphorylation is inhibited by MPK12 and MPK4. In terms of tissue distribution, expressed in guard cells and in the vasculature of roots and leaves.

The protein localises to the cell membrane. It catalyses the reaction L-seryl-[protein] + ATP = O-phospho-L-seryl-[protein] + ADP + H(+). It carries out the reaction L-threonyl-[protein] + ATP = O-phospho-L-threonyl-[protein] + ADP + H(+). With respect to regulation, negatively regulated by ABI2. Its function is as follows. Receptor kinase acting as an early component in abscisic acid (ABA) signaling. Required for darkness, ABA, high CO(2) and hydrogen peroxide (H(2)O(2)) induction of S-type anion currents in guard cells leading to stomatal closure, possibly via the phosphorylation and activation of the anion channel SLAC1 and as a scaffolding component. Seems to act in parallel with SRK2E/OST1 in the ABA signaling pathway which regulates stomatal movement. Binds ATP. Involved in the local and/or systemic stomatal responses (e.g. stomatal closure) to light stress. This is LRR receptor-like serine/threonine-protein kinase GHR1 from Arabidopsis thaliana (Mouse-ear cress).